Reading from the N-terminus, the 275-residue chain is 4-hydroxy-tetrahydrodipicolinate reductase (275 aa).

Residues 13 to 18 (GAAGKM), 108 to 110 (GTT), and 134 to 137 (APNF) contribute to the NAD(+) site. His164 serves as the catalytic Proton donor/acceptor. His165 is a binding site for (S)-2,3,4,5-tetrahydrodipicolinate. Lys168 acts as the Proton donor in catalysis. 174-175 (GT) is a binding site for (S)-2,3,4,5-tetrahydrodipicolinate.

This sequence belongs to the DapB family.

It localises to the cytoplasm. The enzyme catalyses (S)-2,3,4,5-tetrahydrodipicolinate + NAD(+) + H2O = (2S,4S)-4-hydroxy-2,3,4,5-tetrahydrodipicolinate + NADH + H(+). The catalysed reaction is (S)-2,3,4,5-tetrahydrodipicolinate + NADP(+) + H2O = (2S,4S)-4-hydroxy-2,3,4,5-tetrahydrodipicolinate + NADPH + H(+). It participates in amino-acid biosynthesis; L-lysine biosynthesis via DAP pathway; (S)-tetrahydrodipicolinate from L-aspartate: step 4/4. Functionally, catalyzes the conversion of 4-hydroxy-tetrahydrodipicolinate (HTPA) to tetrahydrodipicolinate. The polypeptide is 4-hydroxy-tetrahydrodipicolinate reductase (Synechocystis sp. (strain ATCC 27184 / PCC 6803 / Kazusa)).